Here is a 482-residue protein sequence, read N- to C-terminus: Beta-1,3-glucan-binding protein 2 (482 aa).

The N-terminal stretch at 1–18 (MWIKSVCLFATIAGCLGQ) is a signal peptide. The region spanning 23–122 (YKVPDAKLEA…GEWTVTEFVN (100 aa)) is the CBM39 domain. Asn124 carries N-linked (GlcNAc...) asparagine glycosylation. Residues 127 to 153 (VVDTSTAPPPVAPAVSEEDQSPGPQWR) are disordered. In terms of domain architecture, GH16 spans 128-482 (VDTSTAPPPV…KVDYVRVYAL (355 aa)). Residue Asn189 is glycosylated (N-linked (GlcNAc...) asparagine).

Monomer. N-glycosylated. In terms of tissue distribution, cuticle and fat body.

Its subcellular location is the secreted. Involved in the recognition of invading microorganisms. Binds specifically to beta-1,3-glucan and lipoteichoic acid and causes aggregation of invading microorganisms. Binding to beta-1,3-glucan activates the phenoloxidase cascade. The sequence is that of Beta-1,3-glucan-binding protein 2 from Manduca sexta (Tobacco hawkmoth).